The chain runs to 178 residues: Translation initiation factor IF-3 (178 aa).

This sequence belongs to the IF-3 family. In terms of assembly, monomer.

Its subcellular location is the cytoplasm. In terms of biological role, IF-3 binds to the 30S ribosomal subunit and shifts the equilibrium between 70S ribosomes and their 50S and 30S subunits in favor of the free subunits, thus enhancing the availability of 30S subunits on which protein synthesis initiation begins. The polypeptide is Translation initiation factor IF-3 (Legionella pneumophila (strain Paris)).